An 88-amino-acid chain; its full sequence is Small ribosomal subunit protein bS20 (88 aa).

The segment at 1–21 (MANSAQAKKRARQNVKARKHN) is disordered. The span at 7–21 (AKKRARQNVKARKHN) shows a compositional bias: basic residues.

It belongs to the bacterial ribosomal protein bS20 family.

Its function is as follows. Binds directly to 16S ribosomal RNA. The protein is Small ribosomal subunit protein bS20 of Acinetobacter baumannii (strain AB307-0294).